We begin with the raw amino-acid sequence, 421 residues long: Protein FAM110C (421 aa).

Disordered regions lie at residues 1–36, 51–80, and 141–266; these read MRALPTLDSLARMRPPLGDPRAAEDTLTPRPANKSA, TLGSSRGPVSEHRVPEAPGVQHRNPIPSAL, and TTRV…PASM. Composition is skewed to basic and acidic residues over residues 143–155, 185–202, and 232–249; these read RVADEDKTTKETE and PAEKTRVANEDKTTKETE. Residue Ser350 is modified to Phosphoserine.

This sequence belongs to the FAM110 family. Interacts with AKT1; the interaction is transient and follows AKT1 activation. Interacts with PPP2CA and alpha-tubulin.

The protein resides in the cytoplasm. It localises to the cytoskeleton. Its subcellular location is the microtubule organizing center. It is found in the centrosome. The protein localises to the spindle pole. The protein resides in the nucleus. May play a role in microtubule organization. May play a role in cell spreading and cell migration of epithelial cells; the function may involve the AKT1 signaling pathway. This chain is Protein FAM110C (Fam110c), found in Mus musculus (Mouse).